The primary structure comprises 357 residues: DNA integrity scanning protein DisA (357 aa).

One can recognise a DAC domain in the interval V8–I146. ATP-binding positions include G75, L93, and M106–T110.

Belongs to the DisA family. As to quaternary structure, homooctamer. Mg(2+) serves as cofactor.

The catalysed reaction is 2 ATP = 3',3'-c-di-AMP + 2 diphosphate. In terms of biological role, participates in a DNA-damage check-point that is active prior to asymmetric division when DNA is damaged. DisA forms globular foci that rapidly scan along the chromosomes during sporulation, searching for lesions. When a lesion is present, DisA pauses at the lesion site. This triggers a cellular response that culminates in a temporary block in sporulation initiation. Functionally, also has diadenylate cyclase activity, catalyzing the condensation of 2 ATP molecules into cyclic di-AMP (c-di-AMP). c-di-AMP acts as a signaling molecule that couples DNA integrity with progression of sporulation. The rise in c-di-AMP level generated by DisA while scanning the chromosome, operates as a positive signal that advances sporulation; upon encountering a lesion, the DisA focus arrests at the damaged site and halts c-di-AMP synthesis. The polypeptide is DNA integrity scanning protein DisA (Bacillus cereus (strain AH187)).